Reading from the N-terminus, the 363-residue chain is Holliday junction branch migration complex subunit RuvB (363 aa).

A disordered region spans residues 1–32 (MAIQTDSFAAAPAPSSGSTRRLISAAPTSPNE). Low complexity predominate over residues 7–18 (SFAAAPAPSSGS). The large ATPase domain (RuvB-L) stretch occupies residues 13 to 200 (APSSGSTRRL…FGIVARLEFY (188 aa)). Residues L39, R40, G81, K84, T85, T86, 147–149 (EDY), R190, Y200, and R237 contribute to the ATP site. A Mg(2+)-binding site is contributed by T85. Residues 201 to 271 (TPEELVRIVT…IAELALTMLD (71 aa)) form a small ATPAse domain (RuvB-S) region. A head domain (RuvB-H) region spans residues 274 to 363 (PRGFDVMDRK…GPVGSDLFEG (90 aa)). R329 and R334 together coordinate DNA.

It belongs to the RuvB family. As to quaternary structure, homohexamer. Forms an RuvA(8)-RuvB(12)-Holliday junction (HJ) complex. HJ DNA is sandwiched between 2 RuvA tetramers; dsDNA enters through RuvA and exits via RuvB. An RuvB hexamer assembles on each DNA strand where it exits the tetramer. Each RuvB hexamer is contacted by two RuvA subunits (via domain III) on 2 adjacent RuvB subunits; this complex drives branch migration. In the full resolvosome a probable DNA-RuvA(4)-RuvB(12)-RuvC(2) complex forms which resolves the HJ.

It localises to the cytoplasm. The catalysed reaction is ATP + H2O = ADP + phosphate + H(+). In terms of biological role, the RuvA-RuvB-RuvC complex processes Holliday junction (HJ) DNA during genetic recombination and DNA repair, while the RuvA-RuvB complex plays an important role in the rescue of blocked DNA replication forks via replication fork reversal (RFR). RuvA specifically binds to HJ cruciform DNA, conferring on it an open structure. The RuvB hexamer acts as an ATP-dependent pump, pulling dsDNA into and through the RuvAB complex. RuvB forms 2 homohexamers on either side of HJ DNA bound by 1 or 2 RuvA tetramers; 4 subunits per hexamer contact DNA at a time. Coordinated motions by a converter formed by DNA-disengaged RuvB subunits stimulates ATP hydrolysis and nucleotide exchange. Immobilization of the converter enables RuvB to convert the ATP-contained energy into a lever motion, pulling 2 nucleotides of DNA out of the RuvA tetramer per ATP hydrolyzed, thus driving DNA branch migration. The RuvB motors rotate together with the DNA substrate, which together with the progressing nucleotide cycle form the mechanistic basis for DNA recombination by continuous HJ branch migration. Branch migration allows RuvC to scan DNA until it finds its consensus sequence, where it cleaves and resolves cruciform DNA. The protein is Holliday junction branch migration complex subunit RuvB of Leptothrix cholodnii (strain ATCC 51168 / LMG 8142 / SP-6) (Leptothrix discophora (strain SP-6)).